Here is an 845-residue protein sequence, read N- to C-terminus: Protein translocase subunit SecA (845 aa).

ATP is bound by residues Gln85, 103–107 (GEGKT), and Asp492. A disordered region spans residues 787–845 (REQVAQGQAEHPETEQDAAAQSNTSAKRQPVRVDKKVGRNDLCPCGSGKKFKNCHGRNA). Residues Cys829, Cys831, Cys840, and His841 each coordinate Zn(2+). Basic residues predominate over residues 835-845 (KKFKNCHGRNA).

The protein belongs to the SecA family. As to quaternary structure, monomer and homodimer. Part of the essential Sec protein translocation apparatus which comprises SecA, SecYEG and auxiliary proteins SecDF. Other proteins may also be involved. Zn(2+) is required as a cofactor.

It is found in the cell membrane. It localises to the cytoplasm. It catalyses the reaction ATP + H2O + cellular proteinSide 1 = ADP + phosphate + cellular proteinSide 2.. Functionally, part of the Sec protein translocase complex. Interacts with the SecYEG preprotein conducting channel. Has a central role in coupling the hydrolysis of ATP to the transfer of proteins into and across the cell membrane, serving as an ATP-driven molecular motor driving the stepwise translocation of polypeptide chains across the membrane. In Enterococcus faecalis (strain ATCC 700802 / V583), this protein is Protein translocase subunit SecA.